Consider the following 1363-residue polypeptide: Kinesin-like protein kif7 (1363 aa).

In terms of domain architecture, Kinesin motor spans 15–347 (AVQVAVRVRP…LNYAKRARNI (333 aa)). 94–101 (GQTGSGKT) serves as a coordination point for ATP. Coiled-coil stretches lie at residues 358 to 385 (EPDR…SETR) and 491 to 552 (EDWR…LLAQ). Positions 603–622 (DSSSYSEQTQWDGTHGNTHC) are enriched in polar residues. Residues 603–642 (DSSSYSEQTQWDGTHGNTHCESSRKLNRDEDGHMQTTRDK) are disordered. Residues 623-640 (ESSRKLNRDEDGHMQTTR) are compositionally biased toward basic and acidic residues. 2 coiled-coil regions span residues 714 to 1068 (LLQA…AAIE) and 1116 to 1225 (DKVV…LREM). A disordered region spans residues 1314-1346 (IVQPGMNSTHWSGSTSLPVTRPRREPRRSSLNT). Over residues 1318-1331 (GMNSTHWSGSTSLP) the composition is skewed to polar residues.

It belongs to the TRAFAC class myosin-kinesin ATPase superfamily. Kinesin family. KIF27 subfamily. Binds microtubules. Interacts with gli1 and sufu.

It localises to the cytoplasm. The protein localises to the cytoskeleton. It is found in the cell projection. Its subcellular location is the cilium. In terms of biological role, acts downstream of smo as an intracellular repressor of hedgehog signaling pathway, mainly through the suppression of gli1 activity. This negative regulatory effect is enhanced in conjunction with the suppressor of fused (sufu) protein. Positively regulates gli2a activity by promoting its dissociation from sufu. Involved in the regulation of microtubular dynamics. This chain is Kinesin-like protein kif7 (kif7), found in Danio rerio (Zebrafish).